The chain runs to 275 residues: Formamidopyrimidine-DNA glycosylase (275 aa).

P2 acts as the Schiff-base intermediate with DNA in catalysis. The active-site Proton donor is the E3. K58 acts as the Proton donor; for beta-elimination activity in catalysis. DNA contacts are provided by H93, R111, and R156. The FPG-type zinc finger occupies 241 to 275 (FVYDRAGLPCRVCGTPIRQIVQGQRSTYFCPTCQR). R265 functions as the Proton donor; for delta-elimination activity in the catalytic mechanism.

The protein belongs to the FPG family. Monomer. The cofactor is Zn(2+).

The enzyme catalyses Hydrolysis of DNA containing ring-opened 7-methylguanine residues, releasing 2,6-diamino-4-hydroxy-5-(N-methyl)formamidopyrimidine.. The catalysed reaction is 2'-deoxyribonucleotide-(2'-deoxyribose 5'-phosphate)-2'-deoxyribonucleotide-DNA = a 3'-end 2'-deoxyribonucleotide-(2,3-dehydro-2,3-deoxyribose 5'-phosphate)-DNA + a 5'-end 5'-phospho-2'-deoxyribonucleoside-DNA + H(+). Its function is as follows. Involved in base excision repair of DNA damaged by oxidation or by mutagenic agents. Acts as a DNA glycosylase that recognizes and removes damaged bases. Has a preference for oxidized purines, such as 7,8-dihydro-8-oxoguanine (8-oxoG). Has AP (apurinic/apyrimidinic) lyase activity and introduces nicks in the DNA strand. Cleaves the DNA backbone by beta-delta elimination to generate a single-strand break at the site of the removed base with both 3'- and 5'-phosphates. The chain is Formamidopyrimidine-DNA glycosylase from Burkholderia ambifaria (strain MC40-6).